A 309-amino-acid polypeptide reads, in one-letter code: HPr kinase/phosphorylase (309 aa).

Catalysis depends on residues His138 and Lys159. Position 153 to 160 (153 to 160) interacts with ATP; the sequence is GQSGVGKS. Ser160 lines the Mg(2+) pocket. Catalysis depends on Asp177, which acts as the Proton acceptor; for phosphorylation activity. Proton donor; for dephosphorylation activity. The segment at 201-210 is important for the catalytic mechanism of both phosphorylation and dephosphorylation; that stretch reads LEIRGLGIIN. Glu202 is a Mg(2+) binding site. Arg243 is a catalytic residue. The tract at residues 264 to 269 is important for the catalytic mechanism of dephosphorylation; the sequence is PVRPGR.

It belongs to the HPrK/P family. In terms of assembly, homohexamer. It depends on Mg(2+) as a cofactor.

It catalyses the reaction [HPr protein]-L-serine + ATP = [HPr protein]-O-phospho-L-serine + ADP + H(+). The catalysed reaction is [HPr protein]-O-phospho-L-serine + phosphate + H(+) = [HPr protein]-L-serine + diphosphate. Its function is as follows. Catalyzes the ATP- as well as the pyrophosphate-dependent phosphorylation of a specific serine residue in HPr, a phosphocarrier protein of the phosphoenolpyruvate-dependent sugar phosphotransferase system (PTS). HprK/P also catalyzes the pyrophosphate-producing, inorganic phosphate-dependent dephosphorylation (phosphorolysis) of seryl-phosphorylated HPr (P-Ser-HPr). The two antagonistic activities of HprK/P are regulated by several intracellular metabolites, which change their concentration in response to the absence or presence of rapidly metabolisable carbon sources (glucose, fructose, etc.) in the growth medium. Also phosphorylates/dephosphorylates the HPr-like catabolite repression protein crh on a specific serine residue. Therefore, by controlling the phosphorylation state of HPr and crh, HPrK/P is a sensor enzyme that plays a major role in the regulation of carbon metabolism and sugar transport: it mediates carbon catabolite repression (CCR), and regulates PTS-catalyzed carbohydrate uptake and inducer exclusion. The protein is HPr kinase/phosphorylase of Bacillus anthracis (strain A0248).